A 142-amino-acid polypeptide reads, in one-letter code: Small ribosomal subunit protein uS9 (142 aa).

Belongs to the universal ribosomal protein uS9 family. As to quaternary structure, component of the small ribosomal subunit. Mature ribosomes consist of a small (40S) and a large (60S) subunit. The 40S subunit contains about 32 different proteins and 1 molecule of RNA (18S). The 60S subunit contains 45 different proteins and 3 molecules of RNA (25S, 5.8S and 5S).

The protein localises to the cytoplasm. Component of the ribosome, a large ribonucleoprotein complex responsible for the synthesis of proteins in the cell. The small ribosomal subunit (SSU) binds messenger RNAs (mRNAs) and translates the encoded message by selecting cognate aminoacyl-transfer RNA (tRNA) molecules. The large subunit (LSU) contains the ribosomal catalytic site termed the peptidyl transferase center (PTC), which catalyzes the formation of peptide bonds, thereby polymerizing the amino acids delivered by tRNAs into a polypeptide chain. The nascent polypeptides leave the ribosome through a tunnel in the LSU and interact with protein factors that function in enzymatic processing, targeting, and the membrane insertion of nascent chains at the exit of the ribosomal tunnel. In Candida albicans (strain SC5314 / ATCC MYA-2876) (Yeast), this protein is Small ribosomal subunit protein uS9 (RPS16A).